Consider the following 134-residue polypeptide: Profilin-2 (134 aa).

Cys-13 and Cys-118 are joined by a disulfide. The Involved in PIP2 interaction motif lies at 84 to 100 (AVIRGKKGSGGITIKKT). A Phosphothreonine modification is found at Thr-114.

The protein belongs to the profilin family. In terms of assembly, occurs in many kinds of cells as a complex with monomeric actin in a 1:1 ratio. Phosphorylated by MAP kinases.

It is found in the cytoplasm. It localises to the cytoskeleton. In terms of biological role, binds to actin and affects the structure of the cytoskeleton. At high concentrations, profilin prevents the polymerization of actin, whereas it enhances it at low concentrations. In Olea europaea (Common olive), this protein is Profilin-2.